A 1048-amino-acid polypeptide reads, in one-letter code: [F-actin]-monooxygenase MICAL1 (1048 aa).

The monooxygenase domain stretch occupies residues 1–489 (MASPASTNPA…QDLYDMMDKE (489 aa)). FAD-binding positions include C95, 114-116 (EKR), 121-123 (RHN), F181, Y293, and D393. Phosphothreonine is present on T475. Over residues 488–502 (KEHAQRKSDEPDSRK) the composition is skewed to basic and acidic residues. Residues 488–508 (KEHAQRKSDEPDSRKTTTGSA) are disordered. The Calponin-homology (CH) domain occupies 507 to 611 (SAGTEELLHW…YLSHFHSAFK (105 aa)). S616 bears the Phosphoserine mark. Residues 643–676 (TRAKVDEETPSTEEPPVSEPSMSPNTPELSEHQE) are disordered. Residues 654–666 (TEEPPVSEPSMSP) show a composition bias toward low complexity. Residues 681-743 (ELCELCGKHL…LQHLPQEDQK (63 aa)) form the LIM zinc-binding domain. Residues C683, C686, H704, C707, C710, C713, C733, and H736 each coordinate Zn(2+). Disordered stretches follow at residues 741–787 (DQKE…QPAR), 805–825 (IIPDSGAEPPPKPPRSCSDLA), and 839–873 (PVQAPQVPEAIEKGDDEEEEEEEEEEEEEPLPPLE). The span at 747 to 765 (NNGSLESQELPTPGDSNMQ) shows a compositional bias: polar residues. The span at 772-787 (PVTRVSPVPSPSQPAR) shows a compositional bias: low complexity. Phosphoserine is present on residues S777 and S781. Coiled coils occupy residues 847 to 867 (EAIEKGDDEEEEEEEEEEEEE), 906 to 949 (EEEM…ESSS), and 974 to 1031 (EEAE…VNQR). Positions 852-868 (GDDEEEEEEEEEEEEEP) are enriched in acidic residues. One can recognise a bMERB domain in the interval 905–1048 (KEEEMKRFCK…EERRLREMPA (144 aa)).

It belongs to the Mical family. In terms of assembly, associates with the SH3 domain of NEDD9. Interacts with VIM and PLXNA3. Interacts with RAB1B, RAB8A, RAB10, RAB13 and RAB15 (in their GTP-bound forms); binding to RAB1B is of low affinity compared to other Rab proteins; at least in case of RAB8A and RAB10 can bind 2 molecules of the Rab proteins simultaneously. Interacts with STK38 and STK38L. Interacts with GRAF1/ARHGAP26, GRAF2/ARHGAP10, RAB8A, RAB8B and RAB10; may bind simultaneously to GRAFs and Rabs and connects GRAFs to Rabs. Does not interact with RAB1 and RAB11A. Requires FAD as cofactor. As to expression, expressed in the postnatal and adult hippocampus; found in dentate gyrus, the polymorphic layer, cornu ammonis (CA) 1-3 and in mossy fibers of the striatum lucidum. In adult hippocampus strongly expressed in CA3 pyramidial neurons.

The protein localises to the cytoplasm. It is found in the cytoskeleton. The protein resides in the endosome membrane. It localises to the midbody. It catalyses the reaction L-methionyl-[F-actin] + NADPH + O2 + H(+) = L-methionyl-(R)-S-oxide-[F-actin] + NADP(+) + H2O. The enzyme catalyses NADPH + O2 + H(+) = H2O2 + NADP(+). Monooxygenase that promotes depolymerization of F-actin by mediating oxidation of specific methionine residues on actin to form methionine-sulfoxide, resulting in actin filament disassembly and preventing repolymerization. In the absence of actin, it also functions as a NADPH oxidase producing H(2)O(2). Acts as a cytoskeletal regulator that connects NEDD9 to intermediate filaments. Also acts as a negative regulator of apoptosis via its interaction with STK38 and STK38L; acts by antagonizing STK38 and STK38L activation by MST1/STK4. Involved in regulation of lamina-specific connectivity in the nervous system such as the development of lamina-restricted hippocampal connections. Through redox regulation of the actin cytoskeleton controls the intracellular distribution of secretory vesicles containing L1/neurofascin/NgCAM family proteins in neurons, thereby regulating their cell surface levels. May act as Rab effector protein and play a role in vesicle trafficking. Promotes endosomal tubule extension by associating with RAB8 (RAB8A or RAB8B), RAB10 and GRAF (GRAF1/ARHGAP26 or GRAF2/ARHGAP10) on the endosomal membrane which may connect GRAFs to Rabs, thereby participating in neosynthesized Rab8-Rab10-Rab11-dependent protein export. In Mus musculus (Mouse), this protein is [F-actin]-monooxygenase MICAL1 (Mical1).